We begin with the raw amino-acid sequence, 84 residues long: Sulfur carrier protein TusA (84 aa).

The active-site Cysteine persulfide intermediate is Cys-21.

It belongs to the sulfur carrier protein TusA family.

Its subcellular location is the cytoplasm. Its function is as follows. Sulfur carrier protein which probably makes part of a sulfur-relay system. The sequence is that of Sulfur carrier protein TusA from Pseudomonas syringae pv. tomato (strain ATCC BAA-871 / DC3000).